A 259-amino-acid polypeptide reads, in one-letter code: Snake venom serine protease homolog rhinocerase 2 (259 aa).

The first 17 residues, 1 to 17 (VLIRVLANLLLLQLSYA), serve as a signal peptide directing secretion. A propeptide spanning residues 18 to 23 (QESSEL) is cleaved from the precursor. One can recognise a Peptidase S1 domain in the interval 24–250 (VIGGDECDIN…YTDWIEGIIA (227 aa)). Disulfide bonds link Cys-30–Cys-164, Cys-51–Cys-67, Cys-99–Cys-257, Cys-143–Cys-211, Cys-175–Cys-190, and Cys-201–Cys-226. A glycan (N-linked (GlcNAc...) asparagine) is linked at Asn-252.

It belongs to the peptidase S1 family. Snake venom subfamily. In terms of tissue distribution, expressed by the venom gland.

Its subcellular location is the secreted. Snake venom serine protease homolog that may act in the hemostasis system of the prey. This Bitis rhinoceros (West African gaboon viper) protein is Snake venom serine protease homolog rhinocerase 2.